The following is a 147-amino-acid chain: Hemoglobin subunit delta (147 aa).

Val2 carries the N-acetylalanine; in variant Niigata modification. In terms of domain architecture, Globin spans 3–147 (HLTPEEKTAV…VANALAHKYH (145 aa)). Phosphoserine is present on Ser51. His64 and His93 together coordinate heme b.

The protein belongs to the globin family. Heterotetramer of two alpha chains and two delta chains in adult hemoglobin A2 (HbA2). HbA2 represents less than 3.5% of adult hemoglobin. As to expression, red blood cells.

Its function is as follows. Involved in oxygen transport from the lung to the various peripheral tissues. The chain is Hemoglobin subunit delta (HBD) from Homo sapiens (Human).